The sequence spans 125 residues: Basic leucine zipper transcriptional factor ATF-like (125 aa).

A compositionally biased stretch (low complexity) spans 1–14 (MPHSSDSSDSSFSR). Positions 1 to 58 (MPHSSDSSDSSFSRSPPPGKQDSSDDVRRVQRREKNRIAAQKSRQRQTQKADTLHLES) are disordered. Positions 26 to 89 (DVRRVQRREK…KYFTSVLNSH (64 aa)) constitute a bZIP domain. The basic motif stretch occupies residues 28-50 (RRVQRREKNRIAAQKSRQRQTQK). Position 43 is a phosphoserine (Ser43). Thr48 is subject to Phosphothreonine. The tract at residues 54–75 (LHLESEDLEKQNAALRKEIKQL) is leucine-zipper.

It belongs to the bZIP family. In terms of assembly, heterodimer; mainly heterodimerizes with JUNB. The BATF-JUNB heterodimer interacts with IRF4 and IRF8. Interacts (via bZIP domain) with IRF4 and IRF8; the interaction is direct. Also forms heterodimers with JUN and JUND. Also interacts with IFI35. Phosphorylated on serine and threonine residues and at least one tyrosine residue. Phosphorylation at Ser-43 inhibit DNA binding activity and transforms it as a negative regulator of AP-1 mediated transcription. Post-translationally, phosphorylated. As to expression, expressed at highest levels in lung, and at lower levels in placenta, liver, kidney, spleen, and peripheral blood. Detected in SW480 colorectal cancer cell line and several hematopoietic tumor cell lines, including Raji Burkitt's lymphoma. Strongly expressed in mature B- and T-lymphocytes. Also expressed in moderate levels in lymph node and appendix and at low levels in thymus and bone marrow.

It localises to the nucleus. The protein resides in the cytoplasm. AP-1 family transcription factor that controls the differentiation of lineage-specific cells in the immune system: specifically mediates the differentiation of T-helper 17 cells (Th17), follicular T-helper cells (TfH), CD8(+) dendritic cells and class-switch recombination (CSR) in B-cells. Acts via the formation of a heterodimer with JUNB that recognizes and binds DNA sequence 5'-TGA[CG]TCA-3'. The BATF-JUNB heterodimer also forms a complex with IRF4 (or IRF8) in immune cells, leading to recognition of AICE sequence (5'-TGAnTCA/GAAA-3'), an immune-specific regulatory element, followed by cooperative binding of BATF and IRF4 (or IRF8) and activation of genes. Controls differentiation of T-helper cells producing interleukin-17 (Th17 cells) by binding to Th17-associated gene promoters: regulates expression of the transcription factor RORC itself and RORC target genes such as IL17 (IL17A or IL17B). Also involved in differentiation of follicular T-helper cells (TfH) by directing expression of BCL6 and MAF. In B-cells, involved in class-switch recombination (CSR) by controlling the expression of both AICDA and of germline transcripts of the intervening heavy-chain region and constant heavy-chain region (I(H)-C(H)). Following infection, can participate in CD8(+) dendritic cell differentiation via interaction with IRF4 and IRF8 to mediate cooperative gene activation. Regulates effector CD8(+) T-cell differentiation by regulating expression of SIRT1. Following DNA damage, part of a differentiation checkpoint that limits self-renewal of hematopoietic stem cells (HSCs): up-regulated by STAT3, leading to differentiation of HSCs, thereby restricting self-renewal of HSCs. This Homo sapiens (Human) protein is Basic leucine zipper transcriptional factor ATF-like (BATF).